We begin with the raw amino-acid sequence, 309 residues long: Homoserine O-succinyltransferase (309 aa).

C142 acts as the Acyl-thioester intermediate in catalysis. 2 residues coordinate substrate: K163 and S192. The Proton acceptor role is filled by H235. E237 is an active-site residue. Substrate is bound at residue R249.

The protein belongs to the MetA family.

It is found in the cytoplasm. It carries out the reaction L-homoserine + succinyl-CoA = O-succinyl-L-homoserine + CoA. It functions in the pathway amino-acid biosynthesis; L-methionine biosynthesis via de novo pathway; O-succinyl-L-homoserine from L-homoserine: step 1/1. Its function is as follows. Transfers a succinyl group from succinyl-CoA to L-homoserine, forming succinyl-L-homoserine. In Citrobacter koseri (strain ATCC BAA-895 / CDC 4225-83 / SGSC4696), this protein is Homoserine O-succinyltransferase.